The sequence spans 198 residues: Inositol diphosphatase DSP4 (198 aa).

The segment at 1–23 (MTLESYAGDVHTVPQSENSMEER) is disordered. In terms of domain architecture, Tyrosine-protein phosphatase spans 34–188 (NFAMVDNGIF…LKHTPLSFSC (155 aa)). Residues 90-102 (FGIERCKEPFVNI) form a WPD loop important for active site topology region. The 1D-myo-inositol hexakisphosphate site is built by N101 and I102. The active-site Phosphocysteine intermediate is the C126.

Belongs to the protein-tyrosine phosphatase family. Atypical dual-specificity phosphatase Siw14-like subfamily. In terms of tissue distribution, highly expressed in flowers and at lower levels in roots, leaves, stems and siliques.

It carries out the reaction 5-diphospho-1D-myo-inositol 1,2,3,4,6-pentakisphosphate + H2O = 1D-myo-inositol hexakisphosphate + phosphate + H(+). It catalyses the reaction 1,5-bis(diphospho)-1D-myo-inositol 2,3,4,6-tetrakisphosphate + H2O = 1-diphospho-1D-myo-inositol 2,3,4,5,6-pentakisphosphate + phosphate + 2 H(+). The enzyme catalyses 3,5-bis(diphospho)-1D-myo-inositol 1,2,4,6-tetrakisphosphate + H2O = 3-diphospho-1D-myo-inositol 1,2,4,5,6-pentakisphosphate + phosphate + 2 H(+). The catalysed reaction is 6-diphospho-1D-myo-inositol pentakisphosphate + H2O = 1D-myo-inositol hexakisphosphate + phosphate + H(+). Its function is as follows. Cleaves the beta-phosphate at the 5-position of soluble inositol pyrophosphates. Has highest activity on 5-diphosphoinositol 1,2,3,4,6-pentakisphosphate (5-InsP(7)), 1,5-bis-diphosphoinositol 2,3,4,6-tetrakisphosphate (1,5-InsP(8)) and 3,5-InsP(8). Acts as a negative regulator of defense responses against the bacterial pathogen Pseudomonas syringae pv tomato strain DC3000. The sequence is that of Inositol diphosphatase DSP4 from Arabidopsis thaliana (Mouse-ear cress).